The chain runs to 221 residues: MRSIVLLSGGLDSAVSLACSLQGGEVCLCLTFDYGQKAAEREKKAAAALAAHYKLRHRVIELPFLKEITSTALVSETSELPAAEEEELDENEASRSSAALVWVPNRNGVFINIAAAFAEAYRCDLVVTGFNREEAASFPDNSPEFVVAANASLSYSTLNKVRVASYTQGLNKTEIVKLGMNMGVPFDLIWSCYGGAEKMCRRCESCLRFIRAAKTAGLQLE.

Residue 7–17 (LSGGLDSAVSL) coordinates ATP. The Zn(2+) site is built by cysteine 192, cysteine 200, cysteine 203, and cysteine 206.

This sequence belongs to the QueC family. As to quaternary structure, homodimer. Zn(2+) is required as a cofactor.

It catalyses the reaction 7-carboxy-7-deazaguanine + NH4(+) + ATP = 7-cyano-7-deazaguanine + ADP + phosphate + H2O + H(+). The protein operates within purine metabolism; 7-cyano-7-deazaguanine biosynthesis. Functionally, catalyzes the ATP-dependent conversion of 7-carboxy-7-deazaguanine (CDG) to 7-cyano-7-deazaguanine (preQ(0)). The protein is 7-cyano-7-deazaguanine synthase of Pelotomaculum thermopropionicum (strain DSM 13744 / JCM 10971 / SI).